Consider the following 177-residue polypeptide: Large ribosomal subunit protein uL6 (177 aa).

It belongs to the universal ribosomal protein uL6 family. As to quaternary structure, part of the 50S ribosomal subunit.

This protein binds to the 23S rRNA, and is important in its secondary structure. It is located near the subunit interface in the base of the L7/L12 stalk, and near the tRNA binding site of the peptidyltransferase center. The polypeptide is Large ribosomal subunit protein uL6 (Idiomarina loihiensis (strain ATCC BAA-735 / DSM 15497 / L2-TR)).